We begin with the raw amino-acid sequence, 344 residues long: uncharacterized protein (344 aa).

The interval 190-232 (SGKRVRSAKKSGADAARASEGATCDRASSESVSPTARPPAQAS) is disordered.

This is an uncharacterized protein from Treponema pallidum (strain Nichols).